Reading from the N-terminus, the 211-residue chain is Thymidylate kinase (211 aa).

11–18 provides a ligand contact to ATP; sequence GPDGAGKT.

This sequence belongs to the thymidylate kinase family.

It carries out the reaction dTMP + ATP = dTDP + ADP. Phosphorylation of dTMP to form dTDP in both de novo and salvage pathways of dTTP synthesis. The sequence is that of Thymidylate kinase from Streptococcus pyogenes serotype M1.